Consider the following 162-residue polypeptide: Auracyanin-A (162 aa).

The signal sequence occupies residues 1 to 22 (MKITLRMMVLAVLTAMAMVLAA). C23 carries the N-palmitoyl cysteine lipid modification. A lipid anchor (S-diacylglycerol cysteine) is attached at C23. Residues 42–162 (VTIEIGSKGE…PLMQGKLVVN (121 aa)) form the Plastocyanin-like domain. H81, C146, H151, and M155 together coordinate Cu cation.

In terms of assembly, monomer. The cofactor is Cu cation.

It is found in the cell membrane. Its function is as follows. Probably a soluble electron acceptor for the integral membrane protein electron transfer alternative complex III (ACIII). The protein is Auracyanin-A of Chloroflexus aurantiacus (strain ATCC 29366 / DSM 635 / J-10-fl).